A 264-amino-acid chain; its full sequence is Phosphonoacetaldehyde hydrolase (264 aa).

Catalysis depends on D9, which acts as the Nucleophile. 2 residues coordinate Mg(2+): D9 and A11. The Schiff-base intermediate with substrate role is filled by K50. D183 is a Mg(2+) binding site.

It belongs to the HAD-like hydrolase superfamily. PhnX family. As to quaternary structure, homodimer. It depends on Mg(2+) as a cofactor.

The enzyme catalyses phosphonoacetaldehyde + H2O = acetaldehyde + phosphate + H(+). Involved in phosphonate degradation. The polypeptide is Phosphonoacetaldehyde hydrolase (phnX) (Bacillus cereus).